The following is a 277-amino-acid chain: Carbonyl reductase [NADPH] 3 (277 aa).

Residue Ser-2 is modified to N-acetylserine. Residues 10–34, 38–42, 63–64, and Asn-90 contribute to the NADP(+) site; these read VTGA…GDVV, RDEAR, and DI. Ser-30 is modified (phosphoserine). Ser-140 provides a ligand contact to substrate. Residue Tyr-194 is the Proton acceptor of the active site. Position 194 to 198 (194 to 198) interacts with NADP(+); sequence YGVSK.

Belongs to the short-chain dehydrogenases/reductases (SDR) family.

It is found in the cytoplasm. It catalyses the reaction a secondary alcohol + NADP(+) = a ketone + NADPH + H(+). It carries out the reaction a quinone + NADPH + H(+) = a quinol + NADP(+). In terms of biological role, catalyzes the NADPH-dependent reduction of carbonyl compounds to their corresponding alcohols. Has low NADPH-dependent oxidoreductase activity. Acts on several orthoquinones, as well as on non-quinone compounds, such as isatin or on the anticancer drug oracin. Best substrates for CBR3 is 1,2- naphthoquinone, hence could play a role in protection against cytotoxicity of exogenous quinones. Exerts activity toward ortho-quinones but not paraquinones. No endogenous substrate for CBR3 except isatin has been identified. The chain is Carbonyl reductase [NADPH] 3 (Cbr3) from Mus musculus (Mouse).